The sequence spans 356 residues: Arginine kinase (356 aa).

In terms of domain architecture, Phosphagen kinase N-terminal spans 9–91; that stretch reads KLEAGFQKLQ…FDPIIEDYHI (83 aa). 64 to 68 is a binding site for L-arginine; that stretch reads GVGIY. Positions 119–356 constitute a Phosphagen kinase C-terminal domain; the sequence is FVISTRVRCG…AELIKLEQSA (238 aa). ATP is bound by residues 122–126 and H185; that span reads STRVR. E225 is an L-arginine binding site. R229 provides a ligand contact to ATP. C271 contacts L-arginine. ATP contacts are provided by residues 280 to 284 and 309 to 314; these read RASVH and RGTRGE. E314 is a binding site for L-arginine.

Belongs to the ATP:guanido phosphotransferase family.

The enzyme catalyses L-arginine + ATP = N(omega)-phospho-L-arginine + ADP + H(+). In Artemia franciscana (Brine shrimp), this protein is Arginine kinase (ARGK).